We begin with the raw amino-acid sequence, 486 residues long: Cobyric acid synthase (486 aa).

Positions 250-438 constitute a GATase cobBQ-type domain; that stretch reads AFRIVVPVPP…LHGMFDTPSA (189 aa). The Nucleophile role is filled by Cys331. His430 is an active-site residue.

The protein belongs to the CobB/CobQ family. CobQ subfamily.

The protein operates within cofactor biosynthesis; adenosylcobalamin biosynthesis. Functionally, catalyzes amidations at positions B, D, E, and G on adenosylcobyrinic A,C-diamide. NH(2) groups are provided by glutamine, and one molecule of ATP is hydrogenolyzed for each amidation. The polypeptide is Cobyric acid synthase (Herminiimonas arsenicoxydans).